The following is a 234-amino-acid chain: uncharacterized protein (234 aa).

This is an uncharacterized protein from Methanocaldococcus jannaschii (strain ATCC 43067 / DSM 2661 / JAL-1 / JCM 10045 / NBRC 100440) (Methanococcus jannaschii).